Consider the following 352-residue polypeptide: uncharacterized protein (352 aa).

This is an uncharacterized protein from Acanthamoeba polyphaga mimivirus (APMV).